We begin with the raw amino-acid sequence, 513 residues long: Activin receptor type-2A (513 aa).

Positions 1–19 (MGAATKLAFAVFLISCSSG) are cleaved as a signal peptide. The Extracellular portion of the chain corresponds to 20–139 (AILGRSETQE…VTPKPPLFNT (120 aa)). Disulfide bonds link Cys30–Cys60, Cys50–Cys78, Cys85–Cys104, Cys91–Cys103, and Cys105–Cys110. N-linked (GlcNAc...) asparagine glycosylation is found at Asn43 and Asn66. The chain crosses the membrane as a helical span at residues 140-160 (LLYSLVPIMGIAVIVLFSFWM). Residues 161 to 513 (YRHHKLAYPP…VDFPPKESSL (353 aa)) are Cytoplasmic-facing. The Protein kinase domain occupies 192 to 485 (LQLLEIKARG…EERIIQMQKL (294 aa)). Residues 198-206 (KARGRFGCV) and Lys219 each bind ATP. Asp322 (proton acceptor) is an active-site residue.

This sequence belongs to the protein kinase superfamily. TKL Ser/Thr protein kinase family. TGFB receptor subfamily. Requires Mg(2+) as cofactor. Mn(2+) serves as cofactor. As to expression, expressed in hen anterior pituitary during the ovulatory cycle and in the ovarian follicle.

The protein resides in the cell membrane. The enzyme catalyses L-threonyl-[receptor-protein] + ATP = O-phospho-L-threonyl-[receptor-protein] + ADP + H(+). The catalysed reaction is L-seryl-[receptor-protein] + ATP = O-phospho-L-seryl-[receptor-protein] + ADP + H(+). Functionally, on ligand binding, forms a receptor complex consisting of two type II and two type I transmembrane serine/threonine kinases. Type II receptors phosphorylate and activate type I receptors which autophosphorylate, then bind and activate SMAD transcriptional regulators. Receptor for activin A, activin B and inhibin A. May modulate neuropeptide expression in dorsal root ganglia (DRG) neurons and ovarian follicle development. This chain is Activin receptor type-2A (ACVR2A), found in Gallus gallus (Chicken).